We begin with the raw amino-acid sequence, 81 residues long: Cytochrome b559 subunit alpha (81 aa).

A helical transmembrane segment spans residues 21–35; it reads VIHSITIPMLFIAGW. Residue His23 coordinates heme.

The protein belongs to the PsbE/PsbF family. As to quaternary structure, heterodimer of an alpha subunit and a beta subunit. PSII is composed of 1 copy each of membrane proteins PsbA, PsbB, PsbC, PsbD, PsbE, PsbF, PsbH, PsbI, PsbJ, PsbK, PsbL, PsbM, PsbT, PsbX, PsbY, PsbZ, Psb30/Ycf12, peripheral proteins PsbO, CyanoQ (PsbQ), PsbU, PsbV and a large number of cofactors. It forms dimeric complexes. It depends on heme b as a cofactor.

Its subcellular location is the cellular thylakoid membrane. Functionally, this b-type cytochrome is tightly associated with the reaction center of photosystem II (PSII). PSII is a light-driven water:plastoquinone oxidoreductase that uses light energy to abstract electrons from H(2)O, generating O(2) and a proton gradient subsequently used for ATP formation. It consists of a core antenna complex that captures photons, and an electron transfer chain that converts photonic excitation into a charge separation. The protein is Cytochrome b559 subunit alpha of Crocosphaera subtropica (strain ATCC 51142 / BH68) (Cyanothece sp. (strain ATCC 51142)).